Consider the following 265-residue polypeptide: Probable aquaporin TIP3-2 (265 aa).

2 helical membrane-spanning segments follow: residues 32–52 (LSEFVATAVFVFAAEGSVYGL) and 62–82 (LGGLLVVAVAHALALAAAVAV). An NPA 1 motif is present at residues 92–94 (NPA). The next 3 helical transmembrane spans lie at 110–130 (AALYWAAQLLGAVLAVLLLRL), 151–171 (ALLLEVVMTFGLVYTVYATAV), and 179–199 (DIAPLAIGLVAGANILAGGPF). Residues 205–207 (NPA) carry the NPA 2 motif. Residues 223–243 (WVYWLGPLIGAGMAGALYEFV) traverse the membrane as a helical segment.

Belongs to the MIP/aquaporin (TC 1.A.8) family. TIP (TC 1.A.8.10) subfamily. As to expression, expressed in leaves and at lower levels in roots.

It localises to the vacuole membrane. Its function is as follows. Aquaporins facilitate the transport of water and small neutral solutes across cell membranes. May be involved in transport from the vacuolar compartment to the cytoplasm. This chain is Probable aquaporin TIP3-2 (TIP3-2), found in Oryza sativa subsp. japonica (Rice).